Consider the following 155-residue polypeptide: Aspartate 1-decarboxylase (155 aa).

Catalysis depends on serine 24, which acts as the Schiff-base intermediate with substrate; via pyruvic acid. Residue serine 24 is modified to Pyruvic acid (Ser). A substrate-binding site is contributed by threonine 56. Tyrosine 57 (proton donor) is an active-site residue. Position 72-74 (72-74) interacts with substrate; it reads GAA.

This sequence belongs to the PanD family. Heterooctamer of four alpha and four beta subunits. It depends on pyruvate as a cofactor. In terms of processing, is synthesized initially as an inactive proenzyme, which is activated by self-cleavage at a specific serine bond to produce a beta-subunit with a hydroxyl group at its C-terminus and an alpha-subunit with a pyruvoyl group at its N-terminus.

The protein localises to the cytoplasm. It catalyses the reaction L-aspartate + H(+) = beta-alanine + CO2. The protein operates within cofactor biosynthesis; (R)-pantothenate biosynthesis; beta-alanine from L-aspartate: step 1/1. Functionally, catalyzes the pyruvoyl-dependent decarboxylation of aspartate to produce beta-alanine. This chain is Aspartate 1-decarboxylase, found in Agrobacterium fabrum (strain C58 / ATCC 33970) (Agrobacterium tumefaciens (strain C58)).